Consider the following 554-residue polypeptide: Chaperonin GroEL (554 aa).

Residues 30-33 (TLGP), lysine 51, 87-91 (DGTTT), glycine 416, and aspartate 503 each bind ATP.

It belongs to the chaperonin (HSP60) family. As to quaternary structure, forms a cylinder of 14 subunits composed of two heptameric rings stacked back-to-back. Interacts with the co-chaperonin GroES.

The protein resides in the cytoplasm. It carries out the reaction ATP + H2O + a folded polypeptide = ADP + phosphate + an unfolded polypeptide.. Together with its co-chaperonin GroES, plays an essential role in assisting protein folding. The GroEL-GroES system forms a nano-cage that allows encapsulation of the non-native substrate proteins and provides a physical environment optimized to promote and accelerate protein folding. This chain is Chaperonin GroEL, found in Holospora obtusa.